The primary structure comprises 239 residues: uncharacterized protein (239 aa).

6 helical membrane-spanning segments follow: residues 30–50 (VALL…IELI), 76–96 (LYLG…IFII), 107–127 (LIPI…FGYI), 157–177 (FIIL…FQIL), 188–208 (MMLS…AIIT), and 214–234 (LIQL…ILVL).

This sequence belongs to the TatC family.

It is found in the plastid. The protein localises to the chloroplast membrane. This is an uncharacterized protein from Cyanidium caldarium (Red alga).